The chain runs to 122 residues: Large ribosomal subunit protein uL14 (122 aa).

This sequence belongs to the universal ribosomal protein uL14 family. Part of the 50S ribosomal subunit. Forms a cluster with proteins L3 and L19. In the 70S ribosome, L14 and L19 interact and together make contacts with the 16S rRNA in bridges B5 and B8.

Functionally, binds to 23S rRNA. Forms part of two intersubunit bridges in the 70S ribosome. The chain is Large ribosomal subunit protein uL14 from Streptomyces griseus subsp. griseus (strain JCM 4626 / CBS 651.72 / NBRC 13350 / KCC S-0626 / ISP 5235).